The following is a 754-amino-acid chain: 5-methyltetrahydropteroyltriglutamate--homocysteine methyltransferase (754 aa).

5-methyltetrahydropteroyltri-L-glutamate contacts are provided by residues 17–20 and K117; that span reads RELK. Residues 431-433 and E484 contribute to the L-homocysteine site; that span reads IGS. L-methionine-binding positions include 431 to 433 and E484; that span reads IGS. Residues 515-516 and W561 contribute to the 5-methyltetrahydropteroyltri-L-glutamate site; that span reads RC. D599 is a binding site for L-homocysteine. D599 serves as a coordination point for L-methionine. E605 is a binding site for 5-methyltetrahydropteroyltri-L-glutamate. Zn(2+)-binding residues include H641, C643, and E665. H694 functions as the Proton donor in the catalytic mechanism. A Zn(2+)-binding site is contributed by C726.

This sequence belongs to the vitamin-B12 independent methionine synthase family. It depends on Zn(2+) as a cofactor.

The catalysed reaction is 5-methyltetrahydropteroyltri-L-glutamate + L-homocysteine = tetrahydropteroyltri-L-glutamate + L-methionine. Its pathway is amino-acid biosynthesis; L-methionine biosynthesis via de novo pathway; L-methionine from L-homocysteine (MetE route): step 1/1. Functionally, catalyzes the transfer of a methyl group from 5-methyltetrahydrofolate to homocysteine resulting in methionine formation. This Salmonella arizonae (strain ATCC BAA-731 / CDC346-86 / RSK2980) protein is 5-methyltetrahydropteroyltriglutamate--homocysteine methyltransferase.